We begin with the raw amino-acid sequence, 149 residues long: MEVIAENRKARFEYFILEEFEAGMILLSSEVKSLRERKANISDAYVTEKKGEIWLNNMHIAEYKAANQKNHKPKRERKLLLHKKEINKLIGQIKTSGITVVPLSIYFNDKGLAKTKIAIVKGKKLYDKRATIKQREWEREKSRLSKNNL.

This sequence belongs to the SmpB family.

The protein localises to the cytoplasm. Functionally, required for rescue of stalled ribosomes mediated by trans-translation. Binds to transfer-messenger RNA (tmRNA), required for stable association of tmRNA with ribosomes. tmRNA and SmpB together mimic tRNA shape, replacing the anticodon stem-loop with SmpB. tmRNA is encoded by the ssrA gene; the 2 termini fold to resemble tRNA(Ala) and it encodes a 'tag peptide', a short internal open reading frame. During trans-translation Ala-aminoacylated tmRNA acts like a tRNA, entering the A-site of stalled ribosomes, displacing the stalled mRNA. The ribosome then switches to translate the ORF on the tmRNA; the nascent peptide is terminated with the 'tag peptide' encoded by the tmRNA and targeted for degradation. The ribosome is freed to recommence translation, which seems to be the essential function of trans-translation. This Wolbachia pipientis subsp. Culex pipiens (strain wPip) protein is SsrA-binding protein.